A 498-amino-acid polypeptide reads, in one-letter code: Ribosomal RNA small subunit methyltransferase G 2 (498 aa).

The tract at residues 1 to 230 (MRNGTIRYPG…FQRLGPPTRI (230 aa)) is methyltransferase G. 3 residues coordinate S-adenosyl-L-methionine: G89, M94, and R154. The tract at residues 231 to 498 (RKETAMKRHG…SQTKHSPAPA (268 aa)) is methyltransferase TrmH family.

The protein in the N-terminal section; belongs to the methyltransferase superfamily. RNA methyltransferase RsmG family. It in the C-terminal section; belongs to the class IV-like SAM-binding methyltransferase superfamily. RNA methyltransferase TrmH family.

The protein resides in the cytoplasm. The catalysed reaction is guanosine(527) in 16S rRNA + S-adenosyl-L-methionine = N(7)-methylguanosine(527) in 16S rRNA + S-adenosyl-L-homocysteine. Functionally, specifically methylates the N7 position of guanine in position 527 of 16S rRNA. This chain is Ribosomal RNA small subunit methyltransferase G 2 (rsmG2), found in Syntrophobacter fumaroxidans (strain DSM 10017 / MPOB).